A 549-amino-acid chain; its full sequence is Oxygen-dependent choline dehydrogenase (549 aa).

4–33 (DFVIIGSGSAGSAMAYRLSEDGRYSVIVIE) provides a ligand contact to FAD. Catalysis depends on His465, which acts as the Proton acceptor.

It belongs to the GMC oxidoreductase family. FAD is required as a cofactor.

It carries out the reaction choline + A = betaine aldehyde + AH2. It catalyses the reaction betaine aldehyde + NAD(+) + H2O = glycine betaine + NADH + 2 H(+). The protein operates within amine and polyamine biosynthesis; betaine biosynthesis via choline pathway; betaine aldehyde from choline (cytochrome c reductase route): step 1/1. Functionally, involved in the biosynthesis of the osmoprotectant glycine betaine. Catalyzes the oxidation of choline to betaine aldehyde and betaine aldehyde to glycine betaine at the same rate. This is Oxygen-dependent choline dehydrogenase from Brucella canis (strain ATCC 23365 / NCTC 10854 / RM-666).